A 213-amino-acid polypeptide reads, in one-letter code: BAG family molecular chaperone regulator 6, mitochondrial (213 aa).

An IQ domain is found at 53-82 (DDAAAARIQAAFRGHLVRRHAAAVRGADDE). The 78-residue stretch at 75–152 (AVRGADDEAT…GLQEVFDAVL (78 aa)) folds into the BAG domain.

As to quaternary structure, interacts with CAM1-1 under normal conditions. Dissociation of the interaction when calcium-CAM1-1 binding increases under saline-alkaline stress.

The protein localises to the mitochondrion. Its function is as follows. Co-chaperone that regulates stress responses. Acts as a negative regulator of saline-alkaline stress tolerance. May participate in stress response through regulating the homeostasis of iron, manganese and zinc ions. The sequence is that of BAG family molecular chaperone regulator 6, mitochondrial from Oryza sativa subsp. japonica (Rice).